The chain runs to 297 residues: Glycerol-3-phosphate dehydrogenase [NAD(P)+] (297 aa).

Positions 11, 33, and 79 each coordinate NADPH. Sn-glycerol 3-phosphate-binding residues include lysine 79, glycine 107, and serine 109. Alanine 111 serves as a coordination point for NADPH. The sn-glycerol 3-phosphate site is built by lysine 161, aspartate 214, serine 224, arginine 225, and asparagine 226. Residue lysine 161 is the Proton acceptor of the active site. Arginine 225 lines the NADPH pocket. 2 residues coordinate NADPH: valine 249 and glutamate 251.

Belongs to the NAD-dependent glycerol-3-phosphate dehydrogenase family.

The protein resides in the cytoplasm. The enzyme catalyses sn-glycerol 3-phosphate + NAD(+) = dihydroxyacetone phosphate + NADH + H(+). It catalyses the reaction sn-glycerol 3-phosphate + NADP(+) = dihydroxyacetone phosphate + NADPH + H(+). Its pathway is membrane lipid metabolism; glycerophospholipid metabolism. In terms of biological role, catalyzes the reduction of the glycolytic intermediate dihydroxyacetone phosphate (DHAP) to sn-glycerol 3-phosphate (G3P), the key precursor for phospholipid synthesis. This is Glycerol-3-phosphate dehydrogenase [NAD(P)+] from Campylobacter jejuni subsp. jejuni serotype O:6 (strain 81116 / NCTC 11828).